A 187-amino-acid polypeptide reads, in one-letter code: Threonylcarbamoyl-AMP synthase (187 aa).

A YrdC-like domain is found at 4–187 (TLDLDRAVAT…DARSGQILRD (184 aa)).

The protein belongs to the SUA5 family. TsaC subfamily.

Its subcellular location is the cytoplasm. The catalysed reaction is L-threonine + hydrogencarbonate + ATP = L-threonylcarbamoyladenylate + diphosphate + H2O. Required for the formation of a threonylcarbamoyl group on adenosine at position 37 (t(6)A37) in tRNAs that read codons beginning with adenine. Catalyzes the conversion of L-threonine, HCO(3)(-)/CO(2) and ATP to give threonylcarbamoyl-AMP (TC-AMP) as the acyladenylate intermediate, with the release of diphosphate. The polypeptide is Threonylcarbamoyl-AMP synthase (Xanthomonas euvesicatoria pv. vesicatoria (strain 85-10) (Xanthomonas campestris pv. vesicatoria)).